A 207-amino-acid chain; its full sequence is uncharacterized protein (207 aa).

It belongs to the flavoredoxin family. It depends on FMN as a cofactor.

This is an uncharacterized protein from Bacillus subtilis (strain 168).